The chain runs to 239 residues: MSEQGLREIARDGLWRNNPGLVQLLGLCPLLGTSNSTVNALGLGLATLLVLVCSNAAVSLVRGAVSEAIRLPAFVMIIAALTTCIELLMQAWTYELYQILGIFIPLITTNCVILGRAEAFAAKNGVLRASFDGLLTGLGFALVLLVLGGLRELLGQGTLLADMQLLFGPAAETWKIQIFPHYQGFLLAILPPGAFIMLGLLIALKNRIDESLAERARAQAGDVPASPQRQRVRVTGVIE.

5 helical membrane-spanning segments follow: residues 41–61 (LGLGLATLLVLVCSNAAVSLV), 71–91 (LPAFVMIIAALTTCIELLMQA), 95–115 (ELYQILGIFIPLITTNCVILG), 130–150 (SFDGLLTGLGFALVLLVLGGL), and 184–204 (GFLLAILPPGAFIMLGLLIAL).

Belongs to the NqrDE/RnfAE family. The complex is composed of six subunits: RnfA, RnfB, RnfC, RnfD, RnfE and RnfG.

Its subcellular location is the cell inner membrane. Functionally, part of a membrane-bound complex that couples electron transfer with translocation of ions across the membrane. This is Ion-translocating oxidoreductase complex subunit E from Pseudomonas paraeruginosa (strain DSM 24068 / PA7) (Pseudomonas aeruginosa (strain PA7)).